The following is a 617-amino-acid chain: Type VII secretion systems protein EssD (617 aa).

The disordered stretch occupies residues 420–448; it reads QNHVTHGPKDSMVRSEGKHSISSHEMNSS. Over residues 426-438 the composition is skewed to basic and acidic residues; it reads GPKDSMVRSEGKH.

The protein belongs to the EssD family. Interacts (via C-terminal) with EssG; this interaction blocks EssD activity. Interacts with EssE.

It localises to the secreted. The protein resides in the cell membrane. Functionally, component of the type VII secretion system (Ess). Plays a role in Ess secretion during infection. Required for the efficient secretion of EsxA. Required for abscess formation and staphylococcal persistence in host tissue. Possesses a toxic DNase activity that is modulated by EssG by forming a nuclease toxin-antitoxin pair. This nuclease toxin targets competitor bacteria. The chain is Type VII secretion systems protein EssD from Staphylococcus aureus (strain Newman).